Consider the following 82-residue polypeptide: Large ribosomal subunit protein bL27 (82 aa).

Residues 1 to 54 are disordered; sequence MAHKKGQGASRNGRDSESKRLGMKVGAGQRVSTGSILVRQRGTKWHPSQNVGRG.

It belongs to the bacterial ribosomal protein bL27 family.

This is Large ribosomal subunit protein bL27 from Chlamydia caviae (strain ATCC VR-813 / DSM 19441 / 03DC25 / GPIC) (Chlamydophila caviae).